The following is a 134-amino-acid chain: UPF0299 membrane protein KPK_1586 (134 aa).

Helical transmembrane passes span leucine 5–glycine 25, isoleucine 26–leucine 46, isoleucine 66–tryptophan 86, and leucine 93–tryptophan 113.

This sequence belongs to the UPF0299 family.

The protein localises to the cell inner membrane. In Klebsiella pneumoniae (strain 342), this protein is UPF0299 membrane protein KPK_1586.